Here is a 149-residue protein sequence, read N- to C-terminus: MDVQLPIEAKDIQKLIPHRYPFLQLDRITAFEPMKTLTAIKNVTINEPQFQGHFPDLPVMPGVLIIEAMAQACGTLAILSEGGRKENEFFFFAGIDEARFKRQVIPGDQLVFEVELLTSRRGIGKFNAVAKVDGQVAVEAVIMCAKRVV.

The active site involves His-53.

It belongs to the thioester dehydratase family. FabZ subfamily.

The protein resides in the cytoplasm. The enzyme catalyses a (3R)-hydroxyacyl-[ACP] = a (2E)-enoyl-[ACP] + H2O. In terms of biological role, involved in unsaturated fatty acids biosynthesis. Catalyzes the dehydration of short chain beta-hydroxyacyl-ACPs and long chain saturated and unsaturated beta-hydroxyacyl-ACPs. The sequence is that of 3-hydroxyacyl-[acyl-carrier-protein] dehydratase FabZ from Neisseria gonorrhoeae (strain ATCC 700825 / FA 1090).